The sequence spans 370 residues: tRNA-specific 2-thiouridylase MnmA (370 aa).

ATP contacts are provided by residues 19-26 (AMSGGVDS) and Leu-45. Cys-113 acts as the Nucleophile in catalysis. Cys-113 and Cys-209 are oxidised to a cystine. Gly-137 contributes to the ATP binding site. An interaction with tRNA region spans residues 159–161 (KDQ). Residue Cys-209 is the Cysteine persulfide intermediate of the active site.

It belongs to the MnmA/TRMU family.

It is found in the cytoplasm. It carries out the reaction S-sulfanyl-L-cysteinyl-[protein] + uridine(34) in tRNA + AH2 + ATP = 2-thiouridine(34) in tRNA + L-cysteinyl-[protein] + A + AMP + diphosphate + H(+). In terms of biological role, catalyzes the 2-thiolation of uridine at the wobble position (U34) of tRNA, leading to the formation of s(2)U34. The polypeptide is tRNA-specific 2-thiouridylase MnmA (Rickettsia conorii (strain ATCC VR-613 / Malish 7)).